We begin with the raw amino-acid sequence, 295 residues long: UDP-N-acetylenolpyruvoylglucosamine reductase (295 aa).

Positions 24 to 188 (KVGGNAEIFF…LKVIFKINKG (165 aa)) constitute an FAD-binding PCMH-type domain. Arg168 is an active-site residue. The active-site Proton donor is the Ser217. Glu287 is an active-site residue.

It belongs to the MurB family. The cofactor is FAD.

The protein resides in the cytoplasm. The enzyme catalyses UDP-N-acetyl-alpha-D-muramate + NADP(+) = UDP-N-acetyl-3-O-(1-carboxyvinyl)-alpha-D-glucosamine + NADPH + H(+). The protein operates within cell wall biogenesis; peptidoglycan biosynthesis. In terms of biological role, cell wall formation. This Rickettsia rickettsii (strain Iowa) protein is UDP-N-acetylenolpyruvoylglucosamine reductase.